The following is a 240-amino-acid chain: Pro-opiomelanocortin B (240 aa).

The first 36 residues, 1–36 (MFGTFLQNQSVRLNMVCAPWLLAVVVVCVCNPGVEG), serve as a signal peptide directing secretion. Glutamine 37 carries the post-translational modification Pyrrolidone carboxylic acid. Histidine 111 is a propeptide. Position 112 is an N-acetylserine; in Corticotropin (serine 112). At isoleucine 124 the chain carries Isoleucine amide.

This sequence belongs to the POMC family. Specific enzymatic cleavages at paired basic residues yield the different active peptides. In terms of processing, acetylation of beta-endorphin occurs in a tissue-specific manner. As to expression, pituitary and hypothalamus of adult diploid animals.

It is found in the secreted. In terms of biological role, stimulates the adrenal glands to release cortisol. Melanocyte-stimulating hormone alpha: Anorexigenic peptide. Increases the pigmentation of skin by increasing melanin production in melanocytes. Functionally, melanocyte-stimulating hormone beta: Increases the pigmentation of skin by increasing melanin production in melanocytes. Its function is as follows. Beta-endorphin: Endogenous orexigenic opiate. In terms of biological role, endogenous opiate. The polypeptide is Pro-opiomelanocortin B (pomcb) (Oncorhynchus mykiss (Rainbow trout)).